Consider the following 94-residue polypeptide: Secretoglobin family 1C member 1 (94 aa).

The N-terminal stretch at 1–22 (MKGSSALLVALTVLCICGLTRA) is a signal peptide.

It belongs to the secretoglobin family. Expressed in the olfactory mucosa.

The protein localises to the secreted. This is Secretoglobin family 1C member 1 (Scgb1c1) from Rattus norvegicus (Rat).